The primary structure comprises 224 residues: MVKCLIVDDDYKILHYVSQHLEAAQIQTVTQASGESAIAYLANNKVDIAVVDIMMTGMDGFELCQLLKNDYDLPVIMLTARDALSDKERAFVSGTDDYVTKPFEVKELLFRIQAVLRRYQINSQDIIKLGNVTLIQEYMELSVDSKNVNLPTKEFQLLFLLCGQPKHIFTRDTLIERIWGFDYEGDERTIDVHIKRLRHRLNQLKATIEIQTVRGQGYRVITHV.

Residues Lys-3–Leu-116 form the Response regulatory domain. Asp-52 is subject to 4-aspartylphosphate. A DNA-binding region (ompR/PhoB-type) is located at residues Gln-124–Thr-222.

In terms of processing, phosphorylated by HssS.

Its subcellular location is the cytoplasm. Functionally, member of the two-component regulatory system HssS/HssR involved in intracellular heme homeostasis and tempering of staphylococcal virulence. Phosphorylated HssR binds to a direct repeat sequence within hrtAB promoter and activates the expression of hrtAB, an efflux pump, in response to extracellular heme, hemin, hemoglobin or blood. This Staphylococcus haemolyticus (strain JCSC1435) protein is Heme response regulator HssR (hssR).